The sequence spans 347 residues: Phosphoribosylformylglycinamidine cyclo-ligase (347 aa).

Belongs to the AIR synthase family.

Its subcellular location is the cytoplasm. The enzyme catalyses 2-formamido-N(1)-(5-O-phospho-beta-D-ribosyl)acetamidine + ATP = 5-amino-1-(5-phospho-beta-D-ribosyl)imidazole + ADP + phosphate + H(+). It functions in the pathway purine metabolism; IMP biosynthesis via de novo pathway; 5-amino-1-(5-phospho-D-ribosyl)imidazole from N(2)-formyl-N(1)-(5-phospho-D-ribosyl)glycinamide: step 2/2. This is Phosphoribosylformylglycinamidine cyclo-ligase from Alcanivorax borkumensis (strain ATCC 700651 / DSM 11573 / NCIMB 13689 / SK2).